Consider the following 627-residue polypeptide: (-)-alpha-terpineol synthase, chloroplastic (627 aa).

Residues 1-52 (MDLISVLPSASKSCVCLHKPLSSSTHKLKPFCKTIRILVMPRRWEFARPSMS) constitute a chloroplast transit peptide. Mg(2+)-binding residues include D378, D382, and D530. Residues 378–382 (DDMYD) carry the DDXXD motif motif.

Belongs to the terpene synthase family. Tpsd subfamily. The cofactor is Mg(2+). Mn(2+) is required as a cofactor.

Its subcellular location is the plastid. It localises to the chloroplast. It carries out the reaction (2E)-geranyl diphosphate + H2O = (S)-alpha-terpineol + diphosphate. It functions in the pathway terpene metabolism; oleoresin biosynthesis. In terms of biological role, involved in defensive oleoresin formation in conifers in response to insect attack or other injury. Involved in monoterpene (C10) olefins biosynthesis. Produces 57.3% alpha-terpineol (15.1% (+)/84.9% (-)), 27.6% limonene (25.2% (+)/74.8% (-)), 8% terpinolene, 4.7% beta-pinene (14.8% (+)/85.2% (-)), 1.3% alpha-pinene (100% (+)) and 1.1% myrcene. The polypeptide is (-)-alpha-terpineol synthase, chloroplastic (PT10) (Pinus taeda (Loblolly pine)).